The chain runs to 365 residues: Galactoside alpha-(1,2)-fucosyltransferase 1 (365 aa).

At 1–8 (MWPLSHRH) the chain is on the cytoplasmic side. The chain crosses the membrane as a helical; Signal-anchor for type II membrane protein span at residues 9–25 (LCLAFLLVCVLSAISFF). At 26–365 (LHLYQDSIRH…LSPLWTLAEP (340 aa)) the chain is on the lumenal side. N-linked (GlcNAc...) asparagine glycans are attached at residues Asn-65, Asn-301, and Asn-327.

Belongs to the glycosyltransferase 11 family.

The protein resides in the golgi apparatus. It is found in the golgi stack membrane. It carries out the reaction a beta-D-galactosyl-(1-&gt;4)-N-acetyl-beta-D-glucosaminyl derivative + GDP-beta-L-fucose = an alpha-L-Fuc-(1-&gt;2)-beta-D-Gal-(1-&gt;4)-beta-D-GlcNAc derivative + GDP + H(+). It catalyses the reaction a ganglioside GA1 + GDP-beta-L-fucose = a ganglioside Fuc-GA1 + GDP + H(+). The enzyme catalyses a beta-D-Gal-(1-&gt;3)-beta-D-GlcNAc-(1-&gt;3)-beta-D-Gal-(1-&gt;4)-beta-D-Glc-(1&lt;-&gt;1')-Cer(d18:1(4E)) + GDP-beta-L-fucose = alpha-L-fucosyl-(1-&gt;2)- beta-D-galactosyl-(1-&gt;3)-N-acetyl-beta-D-glucosaminyl-(1-&gt;3)-beta-D-galactosyl-(1-&gt;4)-beta-D-glucosyl-(1&lt;-&gt;1')-N-acylsphing-4-enine + GDP + H(+). The catalysed reaction is a neolactoside nLc4Cer(d18:1(4E)) + GDP-beta-L-fucose = a neolactoside IV(2)-alpha-Fuc-nLc4Cer(d18:1(4E)) + GDP + H(+). It carries out the reaction a ganglioside GM1 + GDP-beta-L-fucose = a ganglioside Fuc-GM1 + GDP + H(+). It catalyses the reaction beta-D-galactosyl-(1-&gt;3)-N-acetyl-D-galactosamine + GDP-beta-L-fucose = alpha-L-fucosyl-(1-&gt;2)-beta-D-galactosyl-(1-&gt;3)-N-acetyl-D-galactosamine + GDP + H(+). Its pathway is protein modification; protein glycosylation. Functionally, catalyzes the transfer of L-fucose, from a guanosine diphosphate-beta-L-fucose, to the terminal galactose residue of glycoconjugates through an alpha(1,2) linkage leading to H antigen synthesis that is an intermediate substrate in the synthesis of ABO blood group antigens. H antigen is essential for maturation of the glomerular layer of the main olfactory bulb, in cell migration and early cell-cell contacts during tumor associated angiogenesis. Preferentially fucosylates soluble lactose and to a lesser extent fucosylates glycolipids gangliosides GA1 and GM1a. The chain is Galactoside alpha-(1,2)-fucosyltransferase 1 from Leontopithecus chrysomelas (Golden-headed lion tamarin).